The sequence spans 424 residues: UDP-N-acetylglucosamine 1-carboxyvinyltransferase (424 aa).

22–23 (KN) lines the phosphoenolpyruvate pocket. Arg96 provides a ligand contact to UDP-N-acetyl-alpha-D-glucosamine. Residue Cys120 is the Proton donor of the active site. Cys120 carries the 2-(S-cysteinyl)pyruvic acid O-phosphothioketal modification. Residues 125–129 (RPVDQ), Asp312, and Ile334 each bind UDP-N-acetyl-alpha-D-glucosamine.

Belongs to the EPSP synthase family. MurA subfamily.

The protein resides in the cytoplasm. The catalysed reaction is phosphoenolpyruvate + UDP-N-acetyl-alpha-D-glucosamine = UDP-N-acetyl-3-O-(1-carboxyvinyl)-alpha-D-glucosamine + phosphate. The protein operates within cell wall biogenesis; peptidoglycan biosynthesis. Cell wall formation. Adds enolpyruvyl to UDP-N-acetylglucosamine. The chain is UDP-N-acetylglucosamine 1-carboxyvinyltransferase from Polynucleobacter necessarius subsp. necessarius (strain STIR1).